Consider the following 1556-residue polypeptide: Bromodomain adjacent to zinc finger domain protein 1A (1556 aa).

The interval 1–128 (MPLLHRKPFV…EETVEVIRNN (128 aa)) is required for interaction with the CHRAC1-POLE3 heterodimer. Required for interaction with the CHRAC1-POLE3 heterodimer. The required for interaction with NCOR1 stretch occupies residues 1–133 (MPLLHRKPFV…VIRNNGARLQ (133 aa)). The 107-residue stretch at 22–128 (EEVFYCKVTN…EETVEVIRNN (107 aa)) folds into the WAC domain. Ser270 is modified (phosphoserine). Positions 306 to 397 (KERDKLLKQE…YVEYLKQWSK (92 aa)) form a coiled coil. In terms of domain architecture, DDT spans 422-487 (PEIFGDALMV…LTAIFQAIAE (66 aa)). Residues 634–709 (IEDYVDILRQ…DISIGEEERE (76 aa)) are a coiled coil. Basic and acidic residues predominate over residues 662–695 (EAAARIRKRKEEKLKEQEQKMKEKQEKLKEDEQR). 3 disordered regions span residues 662 to 754 (EAAA…NGFK), 841 to 877 (PSSF…GPRD), and 941 to 966 (FHFS…AYDP). The required for interaction with SMARCA5 and formation of the CHRAC ISWI chromatin remodeling complex stretch occupies residues 667 to 933 (IRKRKEEKLK…QEKSRICAQL (267 aa)). Phosphoserine is present on Ser702. Residues 703-713 (IGEEEREDFDT) show a composition bias toward acidic residues. A compositionally biased stretch (basic and acidic residues) spans 715–726 (IESKDTEQKELD). A compositionally biased stretch (acidic residues) spans 727–736 (QDMVTEDEDD). Thr731 carries the phosphothreonine modification. Composition is skewed to polar residues over residues 842-872 (SSFQ…SNID) and 951-965 (SKPT…NAYD). A Glycyl lysine isopeptide (Lys-Gly) (interchain with G-Cter in SUMO2) cross-link involves residue Lys952. Phosphoserine occurs at positions 960 and 961. The PHD-type zinc finger occupies 1148-1198 (NARCKICRKKGDAENMVLCDGCDRGHHTYCVRPKLKTVPEGDWFCPECRPK). Disordered stretches follow at residues 1202–1376 (RRLS…NFPN) and 1399–1431 (LQES…RQGG). Residues 1213 to 1258 (ESDEDVEDSMGGEDDEVDGDEEEGQSEEEEYEVEQDEDDSQEEEEV) show a composition bias toward acidic residues. Basic residues predominate over residues 1262–1276 (KRGRPQVRLPVKTRG). A compositionally biased stretch (polar residues) spans 1277 to 1312 (KLSSSFSSRGQQQEPGRYPSRSQQSTPKTTVSSKTG). Ser1281, Ser1320, Ser1339, Ser1353, Ser1363, Ser1371, Ser1402, Ser1413, and Ser1417 each carry phosphoserine. The span at 1363-1374 (SANNTPENSPNF) shows a compositional bias: polar residues. A Bromo domain is found at 1430 to 1533 (GGVHELSAFE…AFFHIQAQKL (104 aa)). Phosphothreonine is present on Thr1547.

It belongs to the WAL family. In terms of assembly, component of the ACF-1 ISWI chromatin remodeling complex at least composed of SMARCA1 and BAZ1A, which regulates the spacing of histone octamers on the DNA template to facilitate access to DNA. Within the ACF-1 ISWI chromatin remodeling complex interacts with SMARCA1; the interaction is direct. Component of the ACF-5 ISWI chromatin remodeling complex (also called the ACF complex) at least composed of BAZ1A and SMARCA5/SNF2H, which regulates the spacing of histone octamers on the DNA template to facilitate access to DNA. Within the ACF-5 ISWI chromatin remodeling complex interacts with SMARCA5/SNF2H; the interaction is direct. Component of the CHRAC ISWI chromatin remodeling complex at least composed of SMARCA5/SNF2H, BAZ1A/ACF1, CHRAC1 and POLE3; the complex preferentially binds DNA through the CHRAC1-POLE3 heterodimer and possesses ATP-dependent nucleosome-remodeling activity. Within the complex interacts (via N-terminus) with POLE3-CHRAC1 heterodimer; the interaction is direct and is required for the complex to preferentially bind to DNA. Within the complex interacts with SMARCA5/SNF2H; the interaction is direct and promotes the interaction with the POLE3-CHRAC1 heterodimer. Interacts with NCOR1 (via its RD1 domain); the interaction corepresses a number of NCOR1-regulated genes. Highly expressed in testis and at low or undetectable levels in other tissues analyzed.

The protein localises to the nucleus. Regulatory subunit of the ATP-dependent ACF-1 and ACF-5 ISWI chromatin remodeling complexes, which form ordered nucleosome arrays on chromatin and slide edge- and center-positioned histone octamers away from their original location on the DNA template to facilitate access to DNA during DNA-templated processes such as DNA replication, transcription, and repair. Both complexes regulate the spacing of nucleosomes along the chromatin and have the ability to slide mononucleosomes to the center of a DNA template in an ATP-dependent manner. The ACF-1 ISWI chromatin remodeling complex has a lower ATP hydrolysis rate than the ACF-5 ISWI chromatin remodeling complex. Has a role in sensing the length of DNA which flank nucleosomes, which modulates the nucleosome spacing activity of the ACF-5 ISWI chromatin remodeling complex. Involved in DNA replication and together with SMARCA5/SNF2H is required for replication of pericentric heterochromatin in S-phase. May have a role in nuclear receptor-mediated transcription repression. The polypeptide is Bromodomain adjacent to zinc finger domain protein 1A (BAZ1A) (Homo sapiens (Human)).